A 309-amino-acid chain; its full sequence is Aspartate carbamoyltransferase catalytic subunit (309 aa).

Residues Arg55 and Thr56 each coordinate carbamoyl phosphate. Lys85 is an L-aspartate binding site. Positions 106, 135, and 138 each coordinate carbamoyl phosphate. Residues Arg168 and Arg230 each coordinate L-aspartate. Residues Leu268 and Pro269 each contribute to the carbamoyl phosphate site.

It belongs to the aspartate/ornithine carbamoyltransferase superfamily. ATCase family. In terms of assembly, heterododecamer (2C3:3R2) of six catalytic PyrB chains organized as two trimers (C3), and six regulatory PyrI chains organized as three dimers (R2).

It carries out the reaction carbamoyl phosphate + L-aspartate = N-carbamoyl-L-aspartate + phosphate + H(+). The protein operates within pyrimidine metabolism; UMP biosynthesis via de novo pathway; (S)-dihydroorotate from bicarbonate: step 2/3. Its function is as follows. Catalyzes the condensation of carbamoyl phosphate and aspartate to form carbamoyl aspartate and inorganic phosphate, the committed step in the de novo pyrimidine nucleotide biosynthesis pathway. The protein is Aspartate carbamoyltransferase catalytic subunit of Aliivibrio salmonicida (strain LFI1238) (Vibrio salmonicida (strain LFI1238)).